The sequence spans 530 residues: V(D)J recombination-activating protein 2 (530 aa).

Residues 416 to 485 form a PHD-type; atypical zinc finger; that stretch reads WIKCCLSCQV…KYFCLDHGGL (70 aa). Residues Cys-419, Cys-423, Cys-446, His-453, His-456, Cys-459, Cys-479, and His-482 each coordinate Zn(2+).

Belongs to the RAG2 family. In terms of assembly, component of the RAG complex composed of core components rag1 and rag2.

The protein resides in the nucleus. Its function is as follows. Core component of the RAG complex, a multiprotein complex that mediates the DNA cleavage phase during V(D)J recombination. V(D)J recombination assembles a diverse repertoire of immunoglobulin and T-cell receptor genes in developing B and T lymphocytes through rearrangement of different V (variable), in some cases D (diversity), and J (joining) gene segments. DNA cleavage by the RAG complex occurs in 2 steps: a first nick is introduced in the top strand immediately upstream of the heptamer, generating a 3'-hydroxyl group that can attack the phosphodiester bond on the opposite strand in a direct transesterification reaction, thereby creating 4 DNA ends: 2 hairpin coding ends and 2 blunt, 5'-phosphorylated ends. In the RAG complex, rag2 is not the catalytic component but is required for all known catalytic activities mediated by RAG1. It probably acts as a sensor of chromatin state that recruits the RAG complex to H3K4me3. The polypeptide is V(D)J recombination-activating protein 2 (rag2) (Danio rerio (Zebrafish)).